A 294-amino-acid chain; its full sequence is 33 kDa chaperonin (294 aa).

Disulfide bonds link C238–C240 and C271–C274.

This sequence belongs to the HSP33 family. In terms of processing, under oxidizing conditions two disulfide bonds are formed involving the reactive cysteines. Under reducing conditions zinc is bound to the reactive cysteines and the protein is inactive.

The protein localises to the cytoplasm. Redox regulated molecular chaperone. Protects both thermally unfolding and oxidatively damaged proteins from irreversible aggregation. Plays an important role in the bacterial defense system toward oxidative stress. The chain is 33 kDa chaperonin from Staphylococcus carnosus (strain TM300).